The sequence spans 206 residues: uncharacterized protein (206 aa).

The 187-residue stretch at 14–200 (QRLINQAVEI…TPVVVREGVG (187 aa)) folds into the YrdC-like domain.

The protein belongs to the SUA5 family.

This is an uncharacterized protein from Escherichia coli O6:H1 (strain CFT073 / ATCC 700928 / UPEC).